Consider the following 1983-residue polypeptide: Nonribosomal peptide synthetase verP (1983 aa).

The adenylation 1 stretch occupies residues 11–405 (FAQAASRCPD…FRGRKDRTVK (395 aa)). The 77-residue stretch at 526 to 602 (DRHLDTLLTV…DVAPLITSRA (77 aa)) folds into the Carrier 1 domain. At serine 563 the chain carries O-(pantetheine 4'-phosphoryl)serine. The tract at residues 769–1047 (ETDELTVVLT…GQHFKHALYS (279 aa)) is condensation 1. An adenylation 2 region spans residues 1089-1469 (QVMGQFPSLI…GRIDRLVKLR (381 aa)). The Carrier 2 domain maps to 1584–1662 (ITRPKIEDKL…DQINMVRALL (79 aa)). Serine 1622 carries the O-(pantetheine 4'-phosphoryl)serine modification. A condensation 2 region spans residues 1652-1976 (KDQINMVRAL…GGLEHPLFEC (325 aa)).

Belongs to the NRP synthetase family.

It participates in mycotoxin biosynthesis. Nonribosomal peptide synthetase; part of the gene cluster that mediates the biosynthesis of 11'-deoxyverticillin A, one of the dimeric epipolythiodioxopiperazines (ETPs) from the verticillin family that act as mycotoxins. 11'-deoxyverticillin A is required for normal conidiation. The nonribosomal peptide synthetase verP is speculated to be responsible for condensation of amino acids to form the carbon skeleton of verticillin, whereas the cluster-specific tailoring enzymes are involved in further modifications leading to the production of 11'-deoxyverticillin A. This is Nonribosomal peptide synthetase verP from Clonostachys rogersoniana.